Here is a 218-residue protein sequence, read N- to C-terminus: Insulin-induced gene 2 protein (218 aa).

Residues 1 to 21 (MGETDNAPRGPPSFLPHKMNL) lie on the Cytoplasmic side of the membrane. The chain crosses the membrane as a helical span at residues 22 to 44 (LLRGLLLFLIGVFLALVLNLLQV). At 45–63 (QRNVTLFPPDVLSSLFSSA) the chain is on the lumenal side. Residues 64–81 (WWVPLCCGTAAAAIGLLY) form a helical membrane-spanning segment. Residues 82 to 96 (PCIDRHLGEPHKFKR) are Cytoplasmic-facing. The helical transmembrane segment at 97–119 (EWSSVMRCVAVFVGINHASAKVD) threads the bilayer. The Lumenal portion of the chain corresponds to 120–122 (FAN). A helical membrane pass occupies residues 123–141 (NTQLSLTLAALSIGLWWTF). Residues 142–146 (DRSRS) lie on the Cytoplasmic side of the membrane. A helical transmembrane segment spans residues 147-168 (GLGLGIGISFFATVVSQLLVYN). The Lumenal segment spans residues 169–182 (GVYEYTAPDFLYVR). A helical membrane pass occupies residues 183 to 200 (SWLPCIFFAGGITMGNIG). At 201–218 (RQLEMYERLALVEKSHRD) the chain is on the cytoplasmic side. The short motif at 212–218 (VEKSHRD) is the KxHxx element.

It belongs to the INSIG family. In terms of assembly, interacts with scap; interaction is direct and only takes place in the presence of sterols; it prevents interaction between scap and the coat protein complex II (COPII). Associates with the SCAP-SREBP complex; association is mediated via its interaction with scap and only takes place in the presence of sterols.

The protein resides in the endoplasmic reticulum membrane. Functionally, oxysterol-binding protein that mediates feedback control of cholesterol synthesis by controlling both endoplasmic reticulum to Golgi transport of scap and degradation of hmgcr. Acts as a negative regulator of cholesterol biosynthesis by mediating the retention of the SCAP-SREBP complex in the endoplasmic reticulum, thereby blocking the processing of sterol regulatory element-binding proteins (SREBPs). Binds oxysterol, including 22-hydroxycholesterol, 24-hydroxycholesterol, 25-hydroxycholesterol and 27-hydroxycholesterol, regulating interaction with scap and retention of the SCAP-SREBP complex in the endoplasmic reticulum. In presence of oxysterol, interacts with scap, retaining the SCAP-SREBP complex in the endoplasmic reticulum, thereby preventing scap from escorting SREBPs to the Golgi. Sterol deprivation reduce oxysterol-binding, disrupting the interaction between insig2 and scap, thereby promoting Golgi transport of the SCAP-SREBP complex, followed by processing and nuclear translocation of SREBPs. Also regulates cholesterol synthesis by regulating degradation of hmgcr. The sequence is that of Insulin-induced gene 2 protein from Xenopus tropicalis (Western clawed frog).